A 507-amino-acid polypeptide reads, in one-letter code: Maturase K (507 aa).

This sequence belongs to the intron maturase 2 family. MatK subfamily.

It is found in the plastid. Its subcellular location is the chloroplast. Functionally, usually encoded in the trnK tRNA gene intron. Probably assists in splicing its own and other chloroplast group II introns. The sequence is that of Maturase K from Kalmia procumbens (Alpine azalea).